A 932-amino-acid polypeptide reads, in one-letter code: Glycine dehydrogenase (decarboxylating) (932 aa).

N6-(pyridoxal phosphate)lysine is present on Lys685.

Belongs to the GcvP family. In terms of assembly, the glycine cleavage system is composed of four proteins: P, T, L and H. The cofactor is pyridoxal 5'-phosphate.

It catalyses the reaction N(6)-[(R)-lipoyl]-L-lysyl-[glycine-cleavage complex H protein] + glycine + H(+) = N(6)-[(R)-S(8)-aminomethyldihydrolipoyl]-L-lysyl-[glycine-cleavage complex H protein] + CO2. In terms of biological role, the glycine cleavage system catalyzes the degradation of glycine. The P protein binds the alpha-amino group of glycine through its pyridoxal phosphate cofactor; CO(2) is released and the remaining methylamine moiety is then transferred to the lipoamide cofactor of the H protein. This chain is Glycine dehydrogenase (decarboxylating), found in Brucella suis biovar 1 (strain 1330).